The chain runs to 1407 residues: DNA-directed RNA polymerase subunit beta' (1407 aa).

Residues Cys70, Cys72, Cys85, and Cys88 each coordinate Zn(2+). Asp460, Asp462, and Asp464 together coordinate Mg(2+). 4 residues coordinate Zn(2+): Cys814, Cys888, Cys895, and Cys898. At Lys972 the chain carries N6-acetyllysine.

It belongs to the RNA polymerase beta' chain family. The RNAP catalytic core consists of 2 alpha, 1 beta, 1 beta' and 1 omega subunit. When a sigma factor is associated with the core the holoenzyme is formed, which can initiate transcription. The cofactor is Mg(2+). Zn(2+) serves as cofactor.

The enzyme catalyses RNA(n) + a ribonucleoside 5'-triphosphate = RNA(n+1) + diphosphate. Its function is as follows. DNA-dependent RNA polymerase catalyzes the transcription of DNA into RNA using the four ribonucleoside triphosphates as substrates. The chain is DNA-directed RNA polymerase subunit beta' from Escherichia coli O6:H1 (strain CFT073 / ATCC 700928 / UPEC).